The chain runs to 101 residues: Cell division protein FtsB (101 aa).

Residues 1–3 (MRI) are Cytoplasmic-facing. The helical transmembrane segment at 4-21 (VIYSMLVLLIAIQYPLWL) threads the bilayer. The Periplasmic portion of the chain corresponds to 22-101 (GKGGWLKVYE…KSSDTQVTKQ (80 aa)). A coiled-coil region spans residues 33-53 (ERQVELQEAKNSLLALRNAKL).

This sequence belongs to the FtsB family. In terms of assembly, part of a complex composed of FtsB, FtsL and FtsQ.

Its subcellular location is the cell inner membrane. In terms of biological role, essential cell division protein. May link together the upstream cell division proteins, which are predominantly cytoplasmic, with the downstream cell division proteins, which are predominantly periplasmic. The polypeptide is Cell division protein FtsB (Polynucleobacter necessarius subsp. necessarius (strain STIR1)).